The following is a 156-amino-acid chain: MPRRREVPKREILPDPKYHNVELAKFVNVLMTRGKKSIAEQIIYGALSHVEKKSGKDPVEVFTQALSNIRPVVEVKSRRVGGANYQVPVEVRSVRRSALAMRWLRDAARKRSEKSMDLRLAGELLEASENRGTAIKKREEVHRMAESNKAFSHFRF.

It belongs to the universal ribosomal protein uS7 family. Part of the 30S ribosomal subunit. Contacts proteins S9 and S11.

Functionally, one of the primary rRNA binding proteins, it binds directly to 16S rRNA where it nucleates assembly of the head domain of the 30S subunit. Is located at the subunit interface close to the decoding center, probably blocks exit of the E-site tRNA. This chain is Small ribosomal subunit protein uS7, found in Nitrosomonas eutropha (strain DSM 101675 / C91 / Nm57).